We begin with the raw amino-acid sequence, 250 residues long: Menaquinol:cytochrome c reductase cytochrome c subunit (250 aa).

Transmembrane regions (helical) follow at residues 46–62, 104–124, and 137–157; these read WLVG…LTVA, VIGA…APFL, and VATG…WESV. The region spanning 178-250 is the Cytochrome c domain; the sequence is DTNAEGYKIA…LQKMANSSPA (73 aa). 3 residues coordinate heme c: Cys-192, Cys-195, and His-196. The tract at residues 229–250 is disordered; it reads MPGGIFKGTDEELQKMANSSPA.

It belongs to the cytochrome b family. As to quaternary structure, the main subunits of the menaquinol:cytochrome c complex are a Rieske-type iron-sulfur protein (QcrA), a cytochrome b (QcrB) and a cytochrome c (QcrC). Heme c is required as a cofactor.

Its subcellular location is the cell membrane. In terms of biological role, component of the menaquinol:cytochrome c reductase complex. This chain is Menaquinol:cytochrome c reductase cytochrome c subunit (qcrC), found in Geobacillus thermodenitrificans.